The chain runs to 167 residues: Adenylylsulfate reductase subunit beta (167 aa).

4Fe-4S ferredoxin-type domains lie at 1–35 (MPTF…LDPE) and 38–67 (KAFN…ARPY). The [4Fe-4S] cluster site is built by Cys10, Cys13, Cys21, Cys25, Cys47, Cys50, Cys53, and Cys57.

Heterodimer composed of AprA and AprB. The heterodimers can dimerize to form heterotetramers. It depends on [4Fe-4S] cluster as a cofactor.

The protein localises to the cytoplasm. Its function is as follows. Iron-sulfur cluster subunit of the adenylylsulfate reductase which catalyzes reversibly the reduction of adenosine 5'-phosphosulfate (APS) to sulfite and AMP during dissimilatory sulfate reduction. The iron-sulfur cluster 2 is thought to accept electrons from a still unknown electron donor and transfer electrons to the iron-sulfur cluster 1 of this protein and then onto the FAD of AprA. In Megalodesulfovibrio gigas (strain ATCC 19364 / DSM 1382 / NCIMB 9332 / VKM B-1759) (Desulfovibrio gigas), this protein is Adenylylsulfate reductase subunit beta.